Consider the following 512-residue polypeptide: Histidine ammonia-lyase (512 aa).

A cross-link (5-imidazolinone (Ala-Gly)) is located at residues 142–144 (ASG). Position 143 is a 2,3-didehydroalanine (Ser) (Ser143).

It belongs to the PAL/histidase family. Post-translationally, contains an active site 4-methylidene-imidazol-5-one (MIO), which is formed autocatalytically by cyclization and dehydration of residues Ala-Ser-Gly.

The protein localises to the cytoplasm. It catalyses the reaction L-histidine = trans-urocanate + NH4(+). It participates in amino-acid degradation; L-histidine degradation into L-glutamate; N-formimidoyl-L-glutamate from L-histidine: step 1/3. This is Histidine ammonia-lyase from Bartonella quintana (strain Toulouse) (Rochalimaea quintana).